The primary structure comprises 81 residues: Photosystem I iron-sulfur center (81 aa).

2 consecutive 4Fe-4S ferredoxin-type domains span residues 2–31 (SHSVKIYDTCIGCTQCVRACPTDVLEMIPW) and 39–68 (IASAPRTEDCVGCKRCESACPTDFLSVRVY). [4Fe-4S] cluster is bound by residues Cys11, Cys14, Cys17, Cys21, Cys48, Cys51, Cys54, and Cys58.

The eukaryotic PSI reaction center is composed of at least 11 subunits. Requires [4Fe-4S] cluster as cofactor.

It is found in the plastid. It localises to the chloroplast thylakoid membrane. It catalyses the reaction reduced [plastocyanin] + hnu + oxidized [2Fe-2S]-[ferredoxin] = oxidized [plastocyanin] + reduced [2Fe-2S]-[ferredoxin]. In terms of biological role, apoprotein for the two 4Fe-4S centers FA and FB of photosystem I (PSI); essential for photochemical activity. FB is the terminal electron acceptor of PSI, donating electrons to ferredoxin. The C-terminus interacts with PsaA/B/D and helps assemble the protein into the PSI complex. Required for binding of PsaD and PsaE to PSI. PSI is a plastocyanin-ferredoxin oxidoreductase, converting photonic excitation into a charge separation, which transfers an electron from the donor P700 chlorophyll pair to the spectroscopically characterized acceptors A0, A1, FX, FA and FB in turn. The polypeptide is Photosystem I iron-sulfur center (Helianthus annuus (Common sunflower)).